The primary structure comprises 241 residues: ATP synthase subunit a (241 aa).

Helical transmembrane passes span 29–49 (NSSFFTMISVILMILFLLFGI), 54–74 (VIPGYLQAAVEYVYDFVISII), 86–106 (IPLIFTVFIFILSCNLVGVLP), 114–134 (HVIVTFALSMVVFIYITIVGF), 153–173 (WLAPIIIIIKLFAYLVRPVSL), 177–197 (LAANMIAGHTIIKVIAGFIVN), 200–220 (IFFTPAPFLFIIALIGFEVFV), and 221–241 (AILQAYIFTILTCVYLSDAVK).

Belongs to the ATPase A chain family. As to quaternary structure, F-type ATPases have 2 components, CF(1) - the catalytic core - and CF(0) - the membrane proton channel. CF(1) has five subunits: alpha(3), beta(3), gamma(1), delta(1), epsilon(1). CF(0) has three main subunits: a(1), b(2) and c(9-12). The alpha and beta chains form an alternating ring which encloses part of the gamma chain. CF(1) is attached to CF(0) by a central stalk formed by the gamma and epsilon chains, while a peripheral stalk is formed by the delta and b chains.

The protein localises to the cell membrane. Its function is as follows. Key component of the proton channel; it plays a direct role in the translocation of protons across the membrane. In Wolbachia pipientis wMel, this protein is ATP synthase subunit a.